Reading from the N-terminus, the 195-residue chain is BAG family molecular chaperone regulator 1A (195 aa).

Residues 6–72 (STVTIHYGNQ…KLGLKNHSKI (67 aa)) form the Ubiquitin-like domain. The interval 78-98 (HKQQRGSKEKDTVEPAPKAEA) is disordered. Positions 83–98 (GSKEKDTVEPAPKAEA) are enriched in basic and acidic residues. Residues 109 to 190 (EIKAIDQYVD…KMLDHVDQTS (82 aa)) form the BAG domain.

As to quaternary structure, binds to the ATPase domain of HSP70/HSC chaperones.

In terms of biological role, inhibits the chaperone activity of HSP70/HSC70 by promoting substrate release. The chain is BAG family molecular chaperone regulator 1A (bag101) from Schizosaccharomyces pombe (strain 972 / ATCC 24843) (Fission yeast).